The sequence spans 211 residues: Histidine biosynthesis bifunctional protein HisIE (211 aa).

A phosphoribosyl-AMP cyclohydrolase region spans residues 1-107 (MNKLIDFSKG…FNSEIESRFK (107 aa)). The segment at 108 to 211 (IQALAQTIHQ…KGERKEVREW (104 aa)) is phosphoribosyl-ATP pyrophosphohydrolase.

In the N-terminal section; belongs to the PRA-CH family. It in the C-terminal section; belongs to the PRA-PH family.

The protein resides in the cytoplasm. The catalysed reaction is 1-(5-phospho-beta-D-ribosyl)-ATP + H2O = 1-(5-phospho-beta-D-ribosyl)-5'-AMP + diphosphate + H(+). It carries out the reaction 1-(5-phospho-beta-D-ribosyl)-5'-AMP + H2O = 1-(5-phospho-beta-D-ribosyl)-5-[(5-phospho-beta-D-ribosylamino)methylideneamino]imidazole-4-carboxamide. Its pathway is amino-acid biosynthesis; L-histidine biosynthesis; L-histidine from 5-phospho-alpha-D-ribose 1-diphosphate: step 2/9. The protein operates within amino-acid biosynthesis; L-histidine biosynthesis; L-histidine from 5-phospho-alpha-D-ribose 1-diphosphate: step 3/9. This chain is Histidine biosynthesis bifunctional protein HisIE, found in Staphylococcus epidermidis (strain ATCC 35984 / DSM 28319 / BCRC 17069 / CCUG 31568 / BM 3577 / RP62A).